The primary structure comprises 237 residues: Phosphoadenosine 5'-phosphosulfate reductase (237 aa).

Cysteine 231 functions as the Nucleophile; cysteine thiosulfonate intermediate in the catalytic mechanism.

Belongs to the PAPS reductase family. CysH subfamily.

It is found in the cytoplasm. The enzyme catalyses [thioredoxin]-disulfide + sulfite + adenosine 3',5'-bisphosphate + 2 H(+) = [thioredoxin]-dithiol + 3'-phosphoadenylyl sulfate. The protein operates within sulfur metabolism; hydrogen sulfide biosynthesis; sulfite from sulfate: step 3/3. Catalyzes the formation of sulfite from phosphoadenosine 5'-phosphosulfate (PAPS) using thioredoxin as an electron donor. The protein is Phosphoadenosine 5'-phosphosulfate reductase of Xylella fastidiosa (strain M12).